The primary structure comprises 175 residues: Large ribosomal subunit protein uL6 (175 aa).

Belongs to the universal ribosomal protein uL6 family. In terms of assembly, part of the 50S ribosomal subunit.

In terms of biological role, this protein binds to the 23S rRNA, and is important in its secondary structure. It is located near the subunit interface in the base of the L7/L12 stalk, and near the tRNA binding site of the peptidyltransferase center. The chain is Large ribosomal subunit protein uL6 from Xanthomonas oryzae pv. oryzae (strain MAFF 311018).